The chain runs to 647 residues: 1-deoxy-D-xylulose-5-phosphate synthase (647 aa).

Residues His-88 and 129–131 (GHA) each bind thiamine diphosphate. Asp-160 contacts Mg(2+). Thiamine diphosphate-binding positions include 161 to 162 (GA), Asn-189, Tyr-300, and Glu-377. Asn-189 is a binding site for Mg(2+).

It belongs to the transketolase family. DXPS subfamily. In terms of assembly, homodimer. Requires Mg(2+) as cofactor. The cofactor is thiamine diphosphate.

The enzyme catalyses D-glyceraldehyde 3-phosphate + pyruvate + H(+) = 1-deoxy-D-xylulose 5-phosphate + CO2. It participates in metabolic intermediate biosynthesis; 1-deoxy-D-xylulose 5-phosphate biosynthesis; 1-deoxy-D-xylulose 5-phosphate from D-glyceraldehyde 3-phosphate and pyruvate: step 1/1. Functionally, catalyzes the acyloin condensation reaction between C atoms 2 and 3 of pyruvate and glyceraldehyde 3-phosphate to yield 1-deoxy-D-xylulose-5-phosphate (DXP). The sequence is that of 1-deoxy-D-xylulose-5-phosphate synthase from Dehalococcoides mccartyi (strain ATCC BAA-2266 / KCTC 15142 / 195) (Dehalococcoides ethenogenes (strain 195)).